A 274-amino-acid polypeptide reads, in one-letter code: uncharacterized protein (274 aa).

A helical transmembrane segment spans residues 238-258 (ILSVQVIFATVIALIAISVFC).

It localises to the membrane. This is an uncharacterized protein from Schizosaccharomyces pombe (strain 972 / ATCC 24843) (Fission yeast).